Reading from the N-terminus, the 568-residue chain is MPQARTIKHVFVTGGVASSLGKGLTASSLGELLTSRGLRVTMQKLDPYLNVDPGTMNPFQHGEVFVTEDGAETDLDIGHYERFLDRDLTRNANVTTGQVYSAVIAKERRGEYLGDTVQVIPHITDQIKARIRVMAEPDEDGRTPDVVITEVGGTVGDIESLPFLEACRQVRHDVGRDNCFFLHVSLVPYLAPSGELKTKPTQHSVAALRNIGIQPDALVCRADRELPEDLKRKIALMCDVDSDGVVACPDAPSIYDIPRVLHSEGLDAYLVRRLGLPFRDVDWSVWGDLLDRVHKPSERVRIALVGKYVDLPDAYLSVTEALRAGGFAHRAKVEIAWVPSDTCETESGAAHALSGMDGVLIPGGFGVRGIEGKLGAIRYARTHGIPTLGLCLGLQCMVIETARALAGLERANSTEFEEPCQHPVISTMADQHDVISGDRDMGGTMRLGSYPAKLVPGSVVAEAYGETEVAERHRHRYEVNNSYRDRLSKAGLVFSGTSPDGRLVEFVELPRDQHPFFVGTQAHPELKSRPTRPHPLFAAFVNAALEYRAAERLPVDISDSVQESTASV.

The tract at residues 1 to 276 is amidoligase domain; the sequence is MPQARTIKHV…DAYLVRRLGL (276 aa). Ser-18 is a binding site for CTP. Ser-18 contacts UTP. ATP-binding positions include 19 to 24 and Asp-76; that span reads SLGKGL. Mg(2+) contacts are provided by Asp-76 and Glu-150. CTP contacts are provided by residues 157-159, 197-202, and Lys-233; these read DIE and KTKPTQ. Residues 197–202 and Lys-233 each bind UTP; that span reads KTKPTQ. Residues 301 to 550 enclose the Glutamine amidotransferase type-1 domain; that stretch reads RIALVGKYVD…VNAALEYRAA (250 aa). Gly-364 serves as a coordination point for L-glutamine. Cys-391 functions as the Nucleophile; for glutamine hydrolysis in the catalytic mechanism. L-glutamine-binding positions include 392–395, Glu-415, and Arg-476; that span reads LGLQ. Residues His-523 and Glu-525 contribute to the active site.

The protein belongs to the CTP synthase family. Homotetramer.

The enzyme catalyses UTP + L-glutamine + ATP + H2O = CTP + L-glutamate + ADP + phosphate + 2 H(+). It carries out the reaction L-glutamine + H2O = L-glutamate + NH4(+). It catalyses the reaction UTP + NH4(+) + ATP = CTP + ADP + phosphate + 2 H(+). Its pathway is pyrimidine metabolism; CTP biosynthesis via de novo pathway; CTP from UDP: step 2/2. Its activity is regulated as follows. Allosterically activated by GTP, when glutamine is the substrate; GTP has no effect on the reaction when ammonia is the substrate. The allosteric effector GTP functions by stabilizing the protein conformation that binds the tetrahedral intermediate(s) formed during glutamine hydrolysis. Inhibited by the product CTP, via allosteric rather than competitive inhibition. In terms of biological role, catalyzes the ATP-dependent amination of UTP to CTP with either L-glutamine or ammonia as the source of nitrogen. Regulates intracellular CTP levels through interactions with the four ribonucleotide triphosphates. This Saccharopolyspora erythraea (strain ATCC 11635 / DSM 40517 / JCM 4748 / NBRC 13426 / NCIMB 8594 / NRRL 2338) protein is CTP synthase.